We begin with the raw amino-acid sequence, 863 residues long: DNA replication licensing factor mcm4 (863 aa).

The interval 1-121 (MSSPTSTPSR…ARQRPDLGSA (121 aa)) is disordered. Composition is skewed to polar residues over residues 54–64 (SPSGDLQSPSG) and 78–99 (SALQ…SSRV). A C4-type zinc finger spans residues 306–331 (CQVCAFTTRVEIDRGRISEPSVCKHC). An MCM domain is found at 458 to 667 (IYERLASALA…YDRRLAHHLV (210 aa)). ATP-binding residues include tyrosine 471, arginine 497, lysine 516, serine 517, asparagine 618, arginine 643, arginine 732, and glutamate 735. The short motif at 642–645 (SRFD) is the Arginine finger element.

It belongs to the MCM family. In terms of assembly, component of the mcm2-7 complex (RLF-M). The complex forms a toroidal hexameric ring with the proposed subunit order mcm2-mcm6-mcm4-mcm7-mcm3-mcm5. The heterodimer of mmcm3/mcm5 interacts with mcm4, mmcm6, mcm7 and weakly with mcm2. Component of the CMG helicase complex, composed of the mcm2-7 complex, the GINS complex and cdc45. Hyperphosphorylated during mitosis in a mechanism requiring cdc2-cyclin B and other kinases. Undergoes dephosphorylation after exiting mitosis, existing in a partially phosphorylated state in the cytosolic interphase mcm complex which associates with the pre-replication complexes (pre-Rcs). Complete dephosphorylation inactivates the mcm complex, preventing its binding to chromatin. Becomes actively phosphorylated during S phase once the mcm complex is assembled on the chromatin. This chromatin-associated phosphorylation occurs during the activation of the pre-Rcs and is independent of cdks. Phosphorylated by the cdc7-dbf4b complex.

The protein localises to the nucleus. It is found in the chromosome. It catalyses the reaction ATP + H2O = ADP + phosphate + H(+). Acts as a component of the MCM2-7 complex (MCM complex) which is the replicative helicase essential for 'once per cell cycle' DNA replication initiation and elongation in eukaryotic cells. Core component of CDC45-MCM-GINS (CMG) helicase, the molecular machine that unwinds template DNA during replication, and around which the replisome is built. The active ATPase sites in the MCM2-7 ring are formed through the interaction surfaces of two neighboring subunits such that a critical structure of a conserved arginine finger motif is provided in trans relative to the ATP-binding site of the Walker A box of the adjacent subunit. The six ATPase active sites, however, are likely to contribute differentially to the complex helicase activity. The protein is DNA replication licensing factor mcm4 of Xenopus tropicalis (Western clawed frog).